We begin with the raw amino-acid sequence, 216 residues long: Vesicle-associated membrane protein 7A (216 aa).

The Cytoplasmic segment spans residues 1–189; sequence MSQTDILYAC…KRKLWWQNKK (189 aa). Positions 6 to 112 constitute a Longin domain; it reads ILYACVSYKG…ATYDPFIRVL (107 aa). Residues 126–186 enclose the v-SNARE coiled-coil homology domain; it reads KMNLVMDQVS…VALKRKLWWQ (61 aa). The chain crosses the membrane as a helical; Anchor for type IV membrane protein span at residues 190–210; sequence LAIAIGLVVCILIAVITLALL. Topologically, residues 211–216 are vesicular; the sequence is KYFKVI.

The protein belongs to the synaptobrevin family. As to quaternary structure, component of the SNARE complex composed of syn7A, syn8A, vamp7A and vti1A.

Its subcellular location is the cytoplasmic vesicle. The protein resides in the secretory vesicle membrane. It is found in the golgi apparatus. It localises to the trans-Golgi network membrane. The protein localises to the late endosome membrane. Its subcellular location is the lysosome membrane. The protein resides in the endoplasmic reticulum membrane. It is found in the phagosome membrane. In terms of biological role, involved in the targeting and/or fusion of transport vesicles to their target membrane during transport of proteins from the early endosome to the lysosome. Required for heterotypic fusion of late endosomes with lysosomes and homotypic lysosomal fusion. Required for calcium regulated lysosomal exocytosis. This chain is Vesicle-associated membrane protein 7A, found in Dictyostelium discoideum (Social amoeba).